Here is a 312-residue protein sequence, read N- to C-terminus: Glyoxylate/hydroxypyruvate reductase A (312 aa).

Residue Arg227 is part of the active site. Residue His275 is the Proton donor of the active site.

The protein belongs to the D-isomer specific 2-hydroxyacid dehydrogenase family. GhrA subfamily.

It is found in the cytoplasm. The catalysed reaction is glycolate + NADP(+) = glyoxylate + NADPH + H(+). It carries out the reaction (R)-glycerate + NAD(+) = 3-hydroxypyruvate + NADH + H(+). It catalyses the reaction (R)-glycerate + NADP(+) = 3-hydroxypyruvate + NADPH + H(+). Its function is as follows. Catalyzes the NADPH-dependent reduction of glyoxylate and hydroxypyruvate into glycolate and glycerate, respectively. Inactive towards 2-oxo-D-gluconate, 2-oxoglutarate, oxaloacetate and pyruvate. Only D- and L-glycerate are involved in the oxidative activity with NADP. Activity with NAD is very low. This chain is Glyoxylate/hydroxypyruvate reductase A (ghrA), found in Escherichia coli (strain K12).